A 422-amino-acid chain; its full sequence is Inhibitory synaptic factor 2A (422 aa).

The disordered stretch occupies residues 143–163; the sequence is FLADSKEKSEAGPMEEPRPCS. Residues 146 to 160 show a composition bias toward basic and acidic residues; it reads DSKEKSEAGPMEEPR. Residue Ser-177 is modified to Phosphoserine. A coiled-coil region spans residues 344–370; the sequence is TEVVDLKAQLQVMENLISSSQETIKVL.

It belongs to the INSYN2 family. In terms of assembly, interacts with GPHN.

The protein resides in the postsynaptic density. Component of the protein machinery at the inhibitory synapses, probably acting as a scaffold. Inhibitory synapses dampen neuronal activity through postsynaptic hyperpolarization. This synaptic inhibition is fundamental for the functioning of the central nervous system, shaping and orchestrating the flow of information through neuronal networks to generate a precise neural code. The chain is Inhibitory synaptic factor 2A from Mus musculus (Mouse).